Consider the following 167-residue polypeptide: Ureidoglycolate lyase (167 aa).

This sequence belongs to the ureidoglycolate lyase family. In terms of assembly, homodimer. Ni(2+) is required as a cofactor.

It carries out the reaction (S)-ureidoglycolate = urea + glyoxylate. It participates in nitrogen metabolism; (S)-allantoin degradation. Functionally, catalyzes the catabolism of the allantoin degradation intermediate (S)-ureidoglycolate, generating urea and glyoxylate. Involved in the utilization of allantoin as nitrogen source. This Pseudomonas fluorescens (strain SBW25) protein is Ureidoglycolate lyase.